We begin with the raw amino-acid sequence, 496 residues long: MGVHGLLPIIRKVASEGIRWLQPEFFSKYYPVLAVDGNLLLYRFFRSPNTPLHTNYQHVLWALKLSRYCRKLKTSPIVVFDNLKPNDFKAEEHEKRSLISSQIVNQRQVVQEQMYFLCNLKNCLIDNNFPTGNFYYEIGPLLSQIGKLLFDLRSLNERDNPFHAQNNAENLENATFVRLIVDKLNDREKTLMIQEKKNHLIHSLRQLLAFSEINDFPSEIRSYLEFILSNLDLECLTLCLKIIKGILTLDELQKAIKLKQTELDKLERRLYRPSPQNIFEIFEILKILGIPASFSPIGVEAEAFASAISQNNLAYAVATQDTDVLLLGSSMISNFLDLNDNFHLPLQIMDPRKIAQELNLTFDGFQDYCLMCGTDFTSRIPKIGPVRALKLIRYYGNAFDVLKALNVEEKYIIPTDYIKKFLTAKKLFTDLPSNNELFSFIHNIPKEFLHLSDSTYLDLEKQVLRIFNVQIEELDAKTPWYYHYELEKDVKSTYEY.

The Mg(2+) site is built by Asp36, Asp81, Glu300, Glu302, Asp321, Asp323, and Asp375.

Belongs to the XPG/RAD2 endonuclease family. FEN1 subfamily. Mg(2+) serves as cofactor.

This is an uncharacterized protein from Schizosaccharomyces pombe (strain 972 / ATCC 24843) (Fission yeast).